The sequence spans 214 residues: Protein GrpE (214 aa).

The span at 1–13 shows a compositional bias: polar residues; that stretch reads MKHTSEPTSQPDT. Positions 1–61 are disordered; it reads MKHTSEPTSQ…AAVAEATIEP (61 aa). Over residues 14 to 57 the composition is skewed to low complexity; the sequence is QAAESAQSSAAAAGQAASAYSSQAQRASADAQAIAGDEAAVAEA.

The protein belongs to the GrpE family. Homodimer.

It is found in the cytoplasm. Its function is as follows. Participates actively in the response to hyperosmotic and heat shock by preventing the aggregation of stress-denatured proteins, in association with DnaK and GrpE. It is the nucleotide exchange factor for DnaK and may function as a thermosensor. Unfolded proteins bind initially to DnaJ; upon interaction with the DnaJ-bound protein, DnaK hydrolyzes its bound ATP, resulting in the formation of a stable complex. GrpE releases ADP from DnaK; ATP binding to DnaK triggers the release of the substrate protein, thus completing the reaction cycle. Several rounds of ATP-dependent interactions between DnaJ, DnaK and GrpE are required for fully efficient folding. The polypeptide is Protein GrpE (Ralstonia nicotianae (strain ATCC BAA-1114 / GMI1000) (Ralstonia solanacearum)).